We begin with the raw amino-acid sequence, 562 residues long: Glycine betaine/proline/choline/ectoine transporter VP1456 (562 aa).

12 helical membrane passes run 68 to 88 (PVFG…LLVE), 110 to 130 (FFMW…FSPL), 147 to 167 (VSWL…FWSV), 203 to 223 (WGVH…FFAF), 243 to 263 (AWGW…LFGL), 287 to 307 (GIGT…LSVV), 322 to 342 (MIVA…TAMG), 373 to 393 (WTVF…MFIA), 404 to 424 (FLFA…SVFG), 456 to 476 (VLPY…VFFI), 503 to 523 (IFWA…GGKE), and 531 to 551 (GVVA…VSLV).

Belongs to the BCCT transporter (TC 2.A.15) family.

The protein resides in the cell inner membrane. In terms of biological role, involved in the uptake of osmoprotectants. Can transport glycine betaine, proline, choline and ectoine. This Vibrio parahaemolyticus serotype O3:K6 (strain RIMD 2210633) protein is Glycine betaine/proline/choline/ectoine transporter VP1456.